Reading from the N-terminus, the 412-residue chain is L-cysteine:1D-myo-inositol 2-amino-2-deoxy-alpha-D-glucopyranoside ligase (412 aa).

Residue C43 coordinates Zn(2+). L-cysteinyl-5'-AMP-binding positions include 43–46 (CGIT), T58, and 81–83 (NVT). Positions 45 to 55 (ITPYDATHLGH) match the 'HIGH' region motif. Positions 186 to 191 (ERGGDP) match the 'ERGGDP' region motif. An L-cysteinyl-5'-AMP-binding site is contributed by W227. C231 lines the Zn(2+) pocket. Residue 249 to 251 (GND) coordinates L-cysteinyl-5'-AMP. A Zn(2+)-binding site is contributed by H256. I283 is an L-cysteinyl-5'-AMP binding site. Positions 289-293 (KMSKS) match the 'KMSKS' region motif.

Belongs to the class-I aminoacyl-tRNA synthetase family. MshC subfamily. In terms of assembly, monomer. Zn(2+) serves as cofactor.

It catalyses the reaction 1D-myo-inositol 2-amino-2-deoxy-alpha-D-glucopyranoside + L-cysteine + ATP = 1D-myo-inositol 2-(L-cysteinylamino)-2-deoxy-alpha-D-glucopyranoside + AMP + diphosphate + H(+). Its function is as follows. Catalyzes the ATP-dependent condensation of GlcN-Ins and L-cysteine to form L-Cys-GlcN-Ins. The sequence is that of L-cysteine:1D-myo-inositol 2-amino-2-deoxy-alpha-D-glucopyranoside ligase from Salinispora arenicola (strain CNS-205).